The primary structure comprises 249 residues: Mannose-binding protein A (249 aa).

A signal peptide spans 1-20 (MLLFSSLPVLLLCVVTASYS). The segment at 41 to 102 (VTNGTPGRDG…KGDPGDTSGV (62 aa)) is disordered. The segment covering 48 to 60 (RDGRDGPKGEKGE) has biased composition (basic and acidic residues). Pro54 is subject to 4-hydroxyproline. Residues Lys55 and Lys58 each carry the 5-hydroxylysine modification. O-linked (Gal...) hydroxylysine glycosylation is found at Lys55 and Lys58. 4 positions are modified to 4-hydroxyproline: Pro61, Pro72, Pro78, and Pro89. Residues 64-98 (GFRGSQGPPGKMGPPGNIGETGPLGPKGQKGDPGD) form the Collagen-like domain. 2 positions are modified to 5-hydroxylysine: Lys90 and Lys93. O-linked (Gal...) hydroxylysine glycosylation is found at Lys90 and Lys93. One can recognise a C-type lectin domain in the interval 135–246 (SRKKLYVTNG…CSSSFLAVCE (112 aa)). 2 disulfides stabilise this stretch: Cys156–Cys245 and Cys223–Cys237. 9 residues coordinate Ca(2+): Asp189, Glu193, Glu213, Asn215, Asp216, Glu221, Asp222, Asn233, and Asp234. A calcium-dependent carbohydrate binding region spans residues 213–221 (EPNDHGSGE).

In terms of assembly, interacts with MASP1 and MASP2. Forms oligomeric complexes of 3, 4, 5 or, predominantly, 6 homotrimers. The homotrimers appear as globular heads that are connected to a central hub by thin stalks. Hydroxylated on lysine and proline residues within the collagen-like domain. Post-translationally, O-glycosylated. O-linked glycans on hydroxylysine residues consist of Glc-Gal disaccharides bound to the oxygen atom of post-translationally added hydroxyl groups. Detected in blood serum (at protein level). Expressed in liver. Weakly expressed in lung, testis and brain. Not detected in bone marrow and heart.

Its subcellular location is the secreted. Calcium-dependent lectin. Plays a role in the innate immune response by binding mannose, fucose and N-acetylglucosamine on bacteria, including strains of A.suis, H.parasuis and A.pleuropneumoniae, and activates the lectin complement pathway. According to some authors, it only binds mannose. In Sus scrofa (Pig), this protein is Mannose-binding protein A.